Consider the following 690-residue polypeptide: uncharacterized protein (690 aa).

To M.genitalium MG366 and M.pneumoniae MPN544.

This is an uncharacterized protein from Ureaplasma parvum serovar 3 (strain ATCC 700970).